The following is a 99-amino-acid chain: Plastocyanin (99 aa).

Residues 1–99 (LDVLLGSDDG…AGMVGKVTVN (99 aa)) enclose the Plastocyanin-like domain. Cu cation-binding residues include His-37, Cys-84, His-87, and Met-92.

Belongs to the plastocyanin family. Requires Cu(2+) as cofactor.

Its subcellular location is the plastid. It localises to the chloroplast thylakoid membrane. Participates in electron transfer between P700 and the cytochrome b6-f complex in photosystem I. The polypeptide is Plastocyanin (PETE) (Mercurialis perennis (Dog's mercury)).